Reading from the N-terminus, the 391-residue chain is Sister chromatid cohesion protein DCC1 (391 aa).

It belongs to the DCC1 family. In terms of assembly, component of the ctf18-RFC complex which consists of ctf18, ctf8, dscc1 and the RFC complex.

Its subcellular location is the nucleus. Loads pcna onto primed templates regulating velocity, spacing and restart activity of replication forks. May couple DNA replication to sister chromatid cohesion. This is Sister chromatid cohesion protein DCC1 (dscc1) from Danio rerio (Zebrafish).